Reading from the N-terminus, the 479-residue chain is Glycogen synthase (479 aa).

Position 15 (Lys-15) interacts with ADP-alpha-D-glucose.

This sequence belongs to the glycosyltransferase 1 family. Bacterial/plant glycogen synthase subfamily.

The catalysed reaction is [(1-&gt;4)-alpha-D-glucosyl](n) + ADP-alpha-D-glucose = [(1-&gt;4)-alpha-D-glucosyl](n+1) + ADP + H(+). It participates in glycan biosynthesis; glycogen biosynthesis. Synthesizes alpha-1,4-glucan chains using ADP-glucose. The chain is Glycogen synthase from Clostridium beijerinckii (strain ATCC 51743 / NCIMB 8052) (Clostridium acetobutylicum).